The following is a 675-amino-acid chain: DNA ligase (675 aa).

NAD(+)-binding positions include 35-39 (DAVYD), 84-85 (SL), and Glu118. The N6-AMP-lysine intermediate role is filled by Lys120. NAD(+)-binding residues include Arg141, Glu178, Lys295, and Lys319. 4 residues coordinate Zn(2+): Cys413, Cys416, Cys431, and Cys436. The 78-residue stretch at 598 to 675 (GAIGALTGQT…DEAELKALLS (78 aa)) folds into the BRCT domain.

The protein belongs to the NAD-dependent DNA ligase family. LigA subfamily. It depends on Mg(2+) as a cofactor. The cofactor is Mn(2+).

The enzyme catalyses NAD(+) + (deoxyribonucleotide)n-3'-hydroxyl + 5'-phospho-(deoxyribonucleotide)m = (deoxyribonucleotide)n+m + AMP + beta-nicotinamide D-nucleotide.. In terms of biological role, DNA ligase that catalyzes the formation of phosphodiester linkages between 5'-phosphoryl and 3'-hydroxyl groups in double-stranded DNA using NAD as a coenzyme and as the energy source for the reaction. It is essential for DNA replication and repair of damaged DNA. The protein is DNA ligase of Synechococcus sp. (strain RCC307).